Reading from the N-terminus, the 118-residue chain is Aspartate 1-decarboxylase (118 aa).

The active-site Schiff-base intermediate with substrate; via pyruvic acid is the Ser-25. A Pyruvic acid (Ser) modification is found at Ser-25. Residue Thr-57 participates in substrate binding. The active-site Proton donor is the Tyr-58. Residue 73–75 (GAA) coordinates substrate.

Belongs to the PanD family. In terms of assembly, heterooctamer of four alpha and four beta subunits. The cofactor is pyruvate. In terms of processing, is synthesized initially as an inactive proenzyme, which is activated by self-cleavage at a specific serine bond to produce a beta-subunit with a hydroxyl group at its C-terminus and an alpha-subunit with a pyruvoyl group at its N-terminus.

The protein resides in the cytoplasm. It catalyses the reaction L-aspartate + H(+) = beta-alanine + CO2. It participates in cofactor biosynthesis; (R)-pantothenate biosynthesis; beta-alanine from L-aspartate: step 1/1. In terms of biological role, catalyzes the pyruvoyl-dependent decarboxylation of aspartate to produce beta-alanine. The protein is Aspartate 1-decarboxylase of Syntrophomonas wolfei subsp. wolfei (strain DSM 2245B / Goettingen).